We begin with the raw amino-acid sequence, 327 residues long: Acetaldehyde dehydrogenase 6 (327 aa).

15-18 (SGNI) is a binding site for NAD(+). Cys133 (acyl-thioester intermediate) is an active-site residue. NAD(+) contacts are provided by residues 164-172 (SAGPGTRAN) and Asn297.

This sequence belongs to the acetaldehyde dehydrogenase family.

It carries out the reaction acetaldehyde + NAD(+) + CoA = acetyl-CoA + NADH + H(+). The polypeptide is Acetaldehyde dehydrogenase 6 (Rhodococcus opacus (strain B4)).